A 374-amino-acid chain; its full sequence is Chaperone protein DnaJ (374 aa).

Positions Asp5–Gly70 constitute a J domain. The CR-type zinc-finger motif lies at Gly133–Tyr211. Zn(2+) is bound by residues Cys146, Cys149, Cys163, Cys166, Cys185, Cys188, Cys199, and Cys202. CXXCXGXG motif repeat units follow at residues Cys146–Gly153, Cys163–Gly170, Cys185–Gly192, and Cys199–Gly206.

This sequence belongs to the DnaJ family. As to quaternary structure, homodimer. It depends on Zn(2+) as a cofactor.

It is found in the cytoplasm. Its function is as follows. Participates actively in the response to hyperosmotic and heat shock by preventing the aggregation of stress-denatured proteins and by disaggregating proteins, also in an autonomous, DnaK-independent fashion. Unfolded proteins bind initially to DnaJ; upon interaction with the DnaJ-bound protein, DnaK hydrolyzes its bound ATP, resulting in the formation of a stable complex. GrpE releases ADP from DnaK; ATP binding to DnaK triggers the release of the substrate protein, thus completing the reaction cycle. Several rounds of ATP-dependent interactions between DnaJ, DnaK and GrpE are required for fully efficient folding. Also involved, together with DnaK and GrpE, in the DNA replication of plasmids through activation of initiation proteins. This chain is Chaperone protein DnaJ, found in Pseudomonas putida (strain ATCC 700007 / DSM 6899 / JCM 31910 / BCRC 17059 / LMG 24140 / F1).